Reading from the N-terminus, the 306-residue chain is Protoheme IX farnesyltransferase (306 aa).

9 helical membrane-spanning segments follow: residues 32–52, 57–77, 108–128, 129–149, 157–177, 183–203, 230–250, 252–272, and 285–305; these read VVQL…PGMP, WALM…AAAF, LLFS…WVNP, LTMW…TVIL, IVIG…AMTG, ALIL…ALAL, VFLY…YGMS, WIYL…GFRL, and FRFS…DHYL.

This sequence belongs to the UbiA prenyltransferase family. Protoheme IX farnesyltransferase subfamily.

The protein resides in the cell inner membrane. It carries out the reaction heme b + (2E,6E)-farnesyl diphosphate + H2O = Fe(II)-heme o + diphosphate. It functions in the pathway porphyrin-containing compound metabolism; heme O biosynthesis; heme O from protoheme: step 1/1. In terms of biological role, converts heme B (protoheme IX) to heme O by substitution of the vinyl group on carbon 2 of heme B porphyrin ring with a hydroxyethyl farnesyl side group. This chain is Protoheme IX farnesyltransferase, found in Acidovorax ebreus (strain TPSY) (Diaphorobacter sp. (strain TPSY)).